A 946-amino-acid polypeptide reads, in one-letter code: Calcium-transporting ATPase type 2C member 2 (946 aa).

Residues 1–106 (MVEGRVSEFL…DNSEPVWKKY (106 aa)) lie on the Cytoplasmic side of the membrane. Residues 71-95 (VDLHTGLSEFSVTQRRLAHGWNEFV) are interaction with ORAI1. A helical membrane pass occupies residues 107–127 (LDQFKNPLILLLLGSALVSVL). Topologically, residues 128–129 (TK) are extracellular. The helical transmembrane segment at 130–150 (EYEDAVSIATAVLVVVTVAFI) threads the bilayer. Residues 151–231 (QEYRSEKSLE…EAEPCSKTDS (81 aa)) are Cytoplasmic-facing. Residues 232 to 252 (PLTGGGDLTTLSNIVFMGTLV) form a helical membrane-spanning segment. The Extracellular portion of the chain corresponds to 253–293 (QYGRGQGVVIGTGESSQFGEVFKMMQAEETPKTPLQKSMDR). Residue Thr264 is modified to Phosphothreonine. Residues Ser267 and Ser268 each carry the phosphoserine modification. The helical transmembrane segment at 294–314 (LGKQLTLFSFGIIGLIMLIGW) threads the bilayer. Residues 315–331 (SQGKQLLSMFTIGVSLA) are Cytoplasmic-facing. The Ca(2+) site is built by Val332, Ala333, Ile335, and Glu337. Residues 332–352 (VAAIPEGLPIVVMVTLVLGVL) form a helical membrane-spanning segment. The Extracellular portion of the chain corresponds to 353–750 (RMAKKRVIVK…ISALSLITLS (398 aa)). Asp379 acts as the 4-aspartylphosphate intermediate in catalysis. Positions 674 and 678 each coordinate Mg(2+). Residues 751 to 771 (TVFNLPSPLNAMQILWINIIM) form a helical membrane-spanning segment. Asn768 and Asp772 together coordinate Ca(2+). Residues 772-804 (DGPPAQSLGVEPVDKDAFRQPPRSVRDTILSRA) are Cytoplasmic-facing. The helical transmembrane segment at 805 to 825 (LILKILMSAAIIISGTLFIFW) threads the bilayer. The Extracellular portion of the chain corresponds to 826–837 (KEMPEDRASTPR). The helical transmembrane segment at 838–855 (TTTMTFTCFVFFDLFNAL) threads the bilayer. Topologically, residues 856–874 (TCRSQTKLIFEIGFLRNHM) are cytoplasmic. Residues 875 to 895 (FLYSVLGSILGQLAVIYIPPL) traverse the membrane as a helical segment. Topologically, residues 896-905 (QRVFQTENLG) are extracellular. Residues 906-926 (ALDLLFLTGLASSVFILSELL) traverse the membrane as a helical segment. Residues 927–946 (KLCEKYCCSPKRVQMHPEDV) lie on the Cytoplasmic side of the membrane.

Belongs to the cation transport ATPase (P-type) (TC 3.A.3) family. Type IIA subfamily. Interacts (via N-terminus) with ORAI1 (via N- and C-termini); this interaction regulates Ca(2+) influx at the plasma membrane. Highly expressed in the gastrointestinal and respiratory tracts, prostate, thyroid, salivary, and mammary glands. Expressed in colon epithelial cells (at protein level). Expressed in brain and testis (at protein level).

It is found in the golgi apparatus. Its subcellular location is the trans-Golgi network membrane. The protein localises to the cell membrane. It localises to the basolateral cell membrane. The enzyme catalyses Ca(2+)(in) + ATP + H2O = Ca(2+)(out) + ADP + phosphate + H(+). It catalyses the reaction Mn(2+)(in) + ATP + H2O = Mn(2+)(out) + ADP + phosphate + H(+). Its function is as follows. ATP-driven pump that supplies the Golgi apparatus with Ca(2+) and Mn(2+) ions, both essential cofactors for processing and trafficking of newly synthesized proteins in the secretory pathway. Within a catalytic cycle, acquires Ca(2+) or Mn(2+) ions on the cytoplasmic side of the membrane and delivers them to the lumenal side. The transfer of ions across the membrane is coupled to ATP hydrolysis and is associated with a transient phosphorylation that shifts the pump conformation from inward-facing to outward-facing state. Induces Ca(2+) influx independently of its ATP-driven pump function. At the basolateral membrane of mammary epithelial cells, interacts with Ca(2+) channel ORAI1 and mediates Ca(2+) entry independently of the Ca(2+) content of endoplasmic reticulum or Golgi stores. May facilitate transepithelial transport of large quantities of Ca(2+) for milk secretion via activation of Ca(2+) influx channels at the plasma membrane and active Ca(2+) transport at the Golgi apparatus. The protein is Calcium-transporting ATPase type 2C member 2 of Homo sapiens (Human).